The chain runs to 110 residues: Chloride intracellular channel protein 1 (110 aa).

Ala-2 is subject to N-acetylalanine. The segment at 2–90 (AEEQPQVELF…EEFLEAVLCP (89 aa)) is required for insertion into the membrane. N6-acetyllysine is present on Lys-13. Residues 24–27 (CPFS) carry the G-site motif. Cys-24 and Cys-59 form a disulfide bridge. A helical membrane pass occupies residues 26–46 (FSQRLFMVLWLKGVTFNVTTV).

This sequence belongs to the chloride channel CLIC family. Monomer. Homodimer (in vitro). Interacts with TRAPPC2. Dimerization requires a conformation change that leads to the exposure of a large hydrophobic surface. In vivo, this may lead to membrane insertion.

The protein resides in the nucleus. It localises to the nucleus membrane. The protein localises to the cytoplasm. It is found in the cell membrane. Its subcellular location is the endoplasmic reticulum. The enzyme catalyses L-dehydroascorbate + 2 glutathione = glutathione disulfide + L-ascorbate. The catalysed reaction is chloride(in) = chloride(out). It carries out the reaction iodide(out) = iodide(in). It catalyses the reaction thiocyanate(in) = thiocyanate(out). The enzyme catalyses nitrate(in) = nitrate(out). The catalysed reaction is bromide(in) = bromide(out). It carries out the reaction fluoride(in) = fluoride(out). In the soluble state, catalyzes glutaredoxin-like thiol disulfide exchange reactions with reduced glutathione as electron donor. Reduces selenite and dehydroascorbate and may act as an antioxidant during oxidative stress response. Can insert into membranes and form voltage-dependent multi-ion conductive channels. Membrane insertion seems to be redox-regulated and may occur only under oxidizing conditions. Involved in regulation of the cell cycle. The chain is Chloride intracellular channel protein 1 (CLIC1) from Sus scrofa (Pig).